The primary structure comprises 551 residues: DEAD-box ATP-dependent RNA helicase 47, mitochondrial (551 aa).

The transit peptide at 1–29 directs the protein to the mitochondrion; it reads MAASTSTRFLVLLKDFSAFRKISWTCAAT. Residues 110–138 carry the Q motif motif; sequence KSFEELGLPDSLLDSLEREGFSVPTDVQS. In terms of domain architecture, Helicase ATP-binding spans 141-340; it reads VPAIIKGHDA…KSWSHEPVLV (200 aa). Position 154 to 161 (154 to 161) interacts with ATP; the sequence is SYTGSGKT. The DEAD box motif lies at 274-277; the sequence is DEVD. The Helicase C-terminal domain occupies 397–548; it reads TLRRCVHALD…ELVVTEEDKA (152 aa).

It belongs to the DEAD box helicase family. Mostly expressed in leaves and flowers, and, to a lower extent, in roots, seedlings and siliques, especially in meristematic regions.

The protein localises to the mitochondrion. It catalyses the reaction ATP + H2O = ADP + phosphate + H(+). Essential protein required during embryogenesis. Required for mitochondrial metabolism. Necessary for normal plasmodesmata (PD) development and aperture regulation. This is DEAD-box ATP-dependent RNA helicase 47, mitochondrial (RH47) from Arabidopsis thaliana (Mouse-ear cress).